Reading from the N-terminus, the 401-residue chain is Coenzyme A biosynthesis bifunctional protein CoaBC (401 aa).

A phosphopantothenoylcysteine decarboxylase region spans residues 1–190 (MQTLAGKKIL…FQPKPLQDKS (190 aa)). Cysteine 159 (proton donor) is an active-site residue. The phosphopantothenate--cysteine ligase stretch occupies residues 191–401 (ILITAGPTRE…LKQIQTLMGH (211 aa)). Residues aspartate 279, lysine 289, 307–310 (PDIV), phenylalanine 326, lysine 340, and lysine 344 each bind CTP.

It in the N-terminal section; belongs to the HFCD (homo-oligomeric flavin containing Cys decarboxylase) superfamily. This sequence in the C-terminal section; belongs to the PPC synthetase family. Mg(2+) is required as a cofactor. Requires FMN as cofactor.

The catalysed reaction is N-[(R)-4-phosphopantothenoyl]-L-cysteine + H(+) = (R)-4'-phosphopantetheine + CO2. It catalyses the reaction (R)-4'-phosphopantothenate + L-cysteine + CTP = N-[(R)-4-phosphopantothenoyl]-L-cysteine + CMP + diphosphate + H(+). It participates in cofactor biosynthesis; coenzyme A biosynthesis; CoA from (R)-pantothenate: step 2/5. It functions in the pathway cofactor biosynthesis; coenzyme A biosynthesis; CoA from (R)-pantothenate: step 3/5. Catalyzes two sequential steps in the biosynthesis of coenzyme A. In the first step cysteine is conjugated to 4'-phosphopantothenate to form 4-phosphopantothenoylcysteine. In the second step the latter compound is decarboxylated to form 4'-phosphopantotheine. This chain is Coenzyme A biosynthesis bifunctional protein CoaBC, found in Vibrio vulnificus (strain YJ016).